The chain runs to 214 residues: Adenylate kinase (214 aa).

10-15 serves as a coordination point for ATP; it reads GAGKGT. Positions 30–59 are NMP; that stretch reads STGDMLRAAIKAGTELGLNAKAVMDAGQLV. AMP contacts are provided by residues Thr31, Arg36, 57–59, 85–88, and Gln92; these read QLV and GFPR. An LID region spans residues 122-159; it reads GRRVHSGSGRTYHVVFNPPKVEGKDDVTGEDLVIRADD. ATP is bound by residues Arg123 and 132 to 133; that span reads TY. AMP contacts are provided by Arg156 and Arg167. Residue Gln200 coordinates ATP.

Belongs to the adenylate kinase family. In terms of assembly, monomer.

The protein localises to the cytoplasm. It catalyses the reaction AMP + ATP = 2 ADP. The protein operates within purine metabolism; AMP biosynthesis via salvage pathway; AMP from ADP: step 1/1. Catalyzes the reversible transfer of the terminal phosphate group between ATP and AMP. Plays an important role in cellular energy homeostasis and in adenine nucleotide metabolism. This Aeromonas salmonicida (strain A449) protein is Adenylate kinase.